We begin with the raw amino-acid sequence, 385 residues long: Probable caffeine synthase 3 (385 aa).

S-adenosyl-L-homocysteine-binding residues include tyrosine 18, cysteine 62, asparagine 67, aspartate 101, leucine 102, serine 140, and phenylalanine 141. Caffeine-binding residues include tyrosine 158, glutamine 161, and phenylalanine 162. Asparagine 179 lines the Mg(2+) pocket. Threonine 238 serves as a coordination point for caffeine. The Mg(2+) site is built by aspartate 261, phenylalanine 263, and asparagine 264. Tyrosine 369 contributes to the caffeine binding site.

The protein belongs to the methyltransferase superfamily. Type-7 methyltransferase family. Mg(2+) serves as cofactor. As to expression, expressed in roots, stems, young and old leaves.

The protein operates within alkaloid biosynthesis. In terms of biological role, may be involved in the biosynthesis of caffeine. The chain is Probable caffeine synthase 3 from Coffea arabica (Arabian coffee).